Here is a 590-residue protein sequence, read N- to C-terminus: Hyaluronan synthase 1 (590 aa).

The Cytoplasmic segment spans residues 1-31 (MKDKAAATMEIPEDPGIPKNLERKRPIVWRM). A helical transmembrane segment spans residues 32–52 (IYYSFAVLLLAAFTAAYVTEF). Over 53-60 (QILTHEDV) the chain is Extracellular. The helical transmembrane segment at 61-81 (LFSLGLYGLVMFLHLMMQSLF) threads the bilayer. Residues 82–401 (AYLEIRRINK…YNAQWWYKHH (320 aa)) lie on the Cytoplasmic side of the membrane. The helical transmembrane segment at 402–422 (IWMTYESVVHFIFPFFITATV) threads the bilayer. Over 423-425 (IRL) the chain is Extracellular. A helical transmembrane segment spans residues 426–446 (LYASTIWNVVWLLLCIQIMSV). Residues 447 to 456 (LKSLYACWLR) lie on the Cytoplasmic side of the membrane. A helical transmembrane segment spans residues 457-477 (GNPIMLLMSLYSMLYMTGLLP). At 478–505 (SKYFAMLTINKSGWGTSGRKKIVGNYMP) the chain is on the extracellular side. Residues 506 to 526 (VLPLSIWMAVLCGGVGYSIYM) form a helical membrane-spanning segment. Residues 527–543 (DCHQDWSTPEKQKELYH) are Cytoplasmic-facing. Residues 544-564 (LLYGCISYTLYWVLMALMYWV) traverse the membrane as a helical segment. Over 565–588 (WVKRCCRKRSQTVTLVHDIPERLV) the chain is Extracellular.

This sequence belongs to the NodC/HAS family. Requires Mg(2+) as cofactor.

Its subcellular location is the membrane. It catalyses the reaction [hyaluronan](n) + UDP-N-acetyl-alpha-D-glucosamine = N-acetyl-beta-D-glucosaminyl-(1-&gt;4)-[hyaluronan](n) + UDP + H(+). The catalysed reaction is N-acetyl-beta-D-glucosaminyl-(1-&gt;4)-[hyaluronan](n) + UDP-alpha-D-glucuronate = [hyaluronan](n+1) + UDP + H(+). It functions in the pathway glycan biosynthesis; hyaluronan biosynthesis. In terms of biological role, catalyzes the addition of GlcNAc or GlcUA monosaccharides to the nascent hyaluronan polymer. Therefore, it is essential to hyaluronan synthesis a major component of most extracellular matrices that has a structural role in tissues architectures and regulates cell adhesion, migration and differentiation. Also able to catalyze the synthesis of chito-oligosaccharide depending on the substrate. The protein is Hyaluronan synthase 1 (has1) of Xenopus tropicalis (Western clawed frog).